A 693-amino-acid chain; its full sequence is Transcription activator of gluconeogenesis BC1G_14637 (693 aa).

The segment covering 1 to 12 (MSGETEIDDPEV) has biased composition (acidic residues). The tract at residues 1–75 (MSGETEIDDP…KFDPKDPLRP (75 aa)) is disordered. Residues 21–49 (YSDHEQELDVIGKEGDNQEMAEQKVRPDG) are compositionally biased toward basic and acidic residues. The span at 52-62 (NGNTVGATATV) shows a compositional bias: polar residues. Residues 65-74 (PKFDPKDPLR) are compositionally biased toward basic and acidic residues. The zn(2)-C6 fungal-type DNA-binding region spans 84 to 112 (CFACQRAHLTCGDERPCQRCIKRGLADAC). Polar residues-rich tracts occupy residues 144–155 (SSNRATAASTPT) and 275–287 (SAETPPQDSSAGM). 4 disordered regions span residues 144-170 (SSNRATAASTPTEPSPGMGNFFSQPDT), 273-299 (SGSAETPPQDSSAGMPQNVGDLGFSNN), 350-413 (TSGS…RNRD), and 531-567 (NLNTNTGSGGPPSSGSSGRGSFTTPRMRPVNLADSNP). Positions 356–367 (SPSTDASPAAST) are enriched in low complexity. The segment covering 369-379 (GFESSPTTTNY) has biased composition (polar residues). Low complexity predominate over residues 394–408 (KSGPSGKLGPSGILG).

The protein belongs to the ERT1/acuK family.

Its subcellular location is the nucleus. Functionally, transcription factor which regulates nonfermentable carbon utilization. Activator of gluconeogenetic genes. The sequence is that of Transcription activator of gluconeogenesis BC1G_14637 from Botryotinia fuckeliana (strain B05.10) (Noble rot fungus).